We begin with the raw amino-acid sequence, 543 residues long: uncharacterized protein (543 aa).

6 consecutive transmembrane segments (helical) span residues 47 to 67 (FSLL…PSLV), 79 to 99 (GGMV…AFAL), 126 to 146 (AFLS…GFAS), 176 to 196 (IYVA…KFLA), 198 to 218 (FSSF…ISLA), and 249 to 269 (FILC…CATI). N-linked (GlcNAc...) asparagine glycosylation occurs at asparagine 275. 3 helical membrane-spanning segments follow: residues 282–302 (IAII…MITI), 335–355 (AVGV…ALCL), and 384–404 (IPLN…LLML). Residue asparagine 406 is glycosylated (N-linked (GlcNAc...) asparagine). 3 helical membrane passes run 410–430 (ISSI…LPLV), 452–472 (ISIV…FPSY), and 480–500 (MNWA…YYYL). N-linked (GlcNAc...) asparagine glycosylation occurs at asparagine 519.

It belongs to the amino acid-polyamine-organocation (APC) superfamily.

It is found in the membrane. This is an uncharacterized protein from Schizosaccharomyces pombe (strain 972 / ATCC 24843) (Fission yeast).